Reading from the N-terminus, the 662-residue chain is Potassium channel KAT3 (662 aa).

At 1 to 90 the chain is on the cytoplasmic side; sequence MSTTTTEARS…HFDRRYRLWE (90 aa). A helical membrane pass occupies residues 91-111; the sequence is LFLVILVGYSAWASLFELAFE. At 112-118 the chain is on the extracellular side; sequence KAAEGAL. A helical membrane pass occupies residues 119–139; it reads LTIDLVVDFFFAVDIILTFFV. Over 140–163 the chain is Cytoplasmic; sequence SYLDNTTYLNVTDHKLIAKRYLKS. Residues 164–184 traverse the membrane as a helical segment; that stretch reads VAFVMDVASTLPIQFIYKTIT. Residues 185-194 are Extracellular-facing; the sequence is GDVGRGQAFG. Residues 195 to 215 traverse the membrane as a helical; Voltage-sensor segment; it reads FLNLLRLWRLRRVAELFKRLE. Topologically, residues 216 to 229 are cytoplasmic; it reads KDAHFNYFVIRVIK. A helical membrane pass occupies residues 230-250; it reads LLCVTIFWIHLAGCILYWIAY. The Extracellular segment spans residues 251-277; it reads HYPRPTDTWIGSQVEDFKERSVWLGYT. Positions 278-297 form an intramembrane region, pore-forming; the sequence is YSMYWSIVTLTTVGYGDLHA. Residues 298-301 lie on the Extracellular side of the membrane; it reads VNSR. A helical transmembrane segment spans residues 302–322; it reads EKTFNMFYMLFNIGLTSYIIG. At 323–662 the chain is on the cytoplasmic side; the sequence is IMTNLVVHGA…LRENDHLYIF (340 aa). Residue 406–527 participates in a nucleoside 3',5'-cyclic phosphate binding; that stretch reads LFKGFPEGLL…MIIANFMTYL (122 aa). The stretch at 528-558 forms a coiled coil; sequence KGLNDELKKEIPFLRDLLDDADAQVQETVQS. Positions 591-662 constitute a KHA domain; sequence RVIIHGQAPP…LRENDHLYIF (72 aa).

The protein belongs to the potassium channel family. Plant (TC 1.A.1.4) subfamily. In terms of assembly, the potassium channel is probably composed of a homo- or heterotetrameric complex of pore-forming subunits. May interact with AKT1 and AKT2. Interacts with SLAC1. Expressed predominantly in root hairs and root endodermis and, at a lower level, in leaf nodes, trichomes, and hydathodes.

It is found in the membrane. In terms of biological role, probable modulatory (alpha) subunit of inward-rectifying potassium channels. Could mediate potassium uptake from the soil solution by plant roots in association with AKT1. The sequence is that of Potassium channel KAT3 (KAT3) from Arabidopsis thaliana (Mouse-ear cress).